The chain runs to 248 residues: 5'-nucleotidase SurE (248 aa).

A divalent metal cation is bound by residues D8, D9, S39, and N91.

It belongs to the SurE nucleotidase family. Requires a divalent metal cation as cofactor.

The protein localises to the cytoplasm. It catalyses the reaction a ribonucleoside 5'-phosphate + H2O = a ribonucleoside + phosphate. In terms of biological role, nucleotidase that shows phosphatase activity on nucleoside 5'-monophosphates. The protein is 5'-nucleotidase SurE of Neisseria meningitidis serogroup B (strain ATCC BAA-335 / MC58).